The following is a 120-amino-acid chain: NAD(P)H-quinone oxidoreductase subunit 3 (120 aa).

3 consecutive transmembrane segments (helical) span residues 10 to 30 (FLGF…TNLI), 64 to 84 (MFAL…PWAV), and 89 to 109 (LGLL…IALA).

The protein belongs to the complex I subunit 3 family. As to quaternary structure, NDH-1 can be composed of about 15 different subunits; different subcomplexes with different compositions have been identified which probably have different functions.

It is found in the cellular thylakoid membrane. The catalysed reaction is a plastoquinone + NADH + (n+1) H(+)(in) = a plastoquinol + NAD(+) + n H(+)(out). It carries out the reaction a plastoquinone + NADPH + (n+1) H(+)(in) = a plastoquinol + NADP(+) + n H(+)(out). Functionally, NDH-1 shuttles electrons from an unknown electron donor, via FMN and iron-sulfur (Fe-S) centers, to quinones in the respiratory and/or the photosynthetic chain. The immediate electron acceptor for the enzyme in this species is believed to be plastoquinone. Couples the redox reaction to proton translocation, and thus conserves the redox energy in a proton gradient. Cyanobacterial NDH-1 also plays a role in inorganic carbon-concentration. The polypeptide is NAD(P)H-quinone oxidoreductase subunit 3 (Prochlorococcus marinus (strain MIT 9215)).